The following is a 79-amino-acid chain: Acyl carrier protein (79 aa).

One can recognise a Carrier domain in the interval 4–79; the sequence is EQILVDVQEA…DVVAYIETKL (76 aa). S39 is modified (O-(pantetheine 4'-phosphoryl)serine).

This sequence belongs to the acyl carrier protein (ACP) family. In terms of processing, 4'-phosphopantetheine is transferred from CoA to a specific serine of apo-ACP by AcpS. This modification is essential for activity because fatty acids are bound in thioester linkage to the sulfhydryl of the prosthetic group.

The protein localises to the cytoplasm. It participates in lipid metabolism; fatty acid biosynthesis. Carrier of the growing fatty acid chain in fatty acid biosynthesis. In Exiguobacterium sp. (strain ATCC BAA-1283 / AT1b), this protein is Acyl carrier protein.